A 205-amino-acid chain; its full sequence is Pyridoxal 5'-phosphate synthase subunit PdxT (205 aa).

Residue 54–56 (GES) coordinates L-glutamine. Cys86 acts as the Nucleophile in catalysis. Residues Arg118 and 147–148 (IR) each bind L-glutamine. Residues His183 and Glu185 each act as charge relay system in the active site.

The protein belongs to the glutaminase PdxT/SNO family. In terms of assembly, in the presence of PdxS, forms a dodecamer of heterodimers. Only shows activity in the heterodimer.

The catalysed reaction is aldehydo-D-ribose 5-phosphate + D-glyceraldehyde 3-phosphate + L-glutamine = pyridoxal 5'-phosphate + L-glutamate + phosphate + 3 H2O + H(+). The enzyme catalyses L-glutamine + H2O = L-glutamate + NH4(+). It participates in cofactor biosynthesis; pyridoxal 5'-phosphate biosynthesis. Functionally, catalyzes the hydrolysis of glutamine to glutamate and ammonia as part of the biosynthesis of pyridoxal 5'-phosphate. The resulting ammonia molecule is channeled to the active site of PdxS. This Nitrosopumilus maritimus (strain SCM1) protein is Pyridoxal 5'-phosphate synthase subunit PdxT.